A 116-amino-acid chain; its full sequence is NADPH-dependent 7-cyano-7-deazaguanine reductase (116 aa).

Catalysis depends on Cys31, which acts as the Thioimide intermediate. Asp38 functions as the Proton donor in the catalytic mechanism. Substrate-binding positions include 53-55 (VEL) and 72-73 (YE).

It belongs to the GTP cyclohydrolase I family. QueF type 1 subfamily.

The protein resides in the cytoplasm. It catalyses the reaction 7-aminomethyl-7-carbaguanine + 2 NADP(+) = 7-cyano-7-deazaguanine + 2 NADPH + 3 H(+). It participates in tRNA modification; tRNA-queuosine biosynthesis. Catalyzes the NADPH-dependent reduction of 7-cyano-7-deazaguanine (preQ0) to 7-aminomethyl-7-deazaguanine (preQ1). This chain is NADPH-dependent 7-cyano-7-deazaguanine reductase, found in Chlorobium phaeovibrioides (strain DSM 265 / 1930) (Prosthecochloris vibrioformis (strain DSM 265)).